We begin with the raw amino-acid sequence, 546 residues long: CTP synthase (546 aa).

Positions Met-1–Ile-265 are amidoligase domain. Position 13 (Ser-13) interacts with CTP. Residue Ser-13 participates in UTP binding. ATP is bound by residues Ser-14 to Ile-19 and Asp-71. Mg(2+) contacts are provided by Asp-71 and Glu-139. Residues Asp-146–Glu-148, Lys-186–Gln-191, and Lys-222 each bind CTP. UTP contacts are provided by residues Lys-186–Gln-191 and Lys-222. Positions Asp-290–Ala-543 constitute a Glutamine amidotransferase type-1 domain. Gly-351 is an L-glutamine binding site. Residue Cys-378 is the Nucleophile; for glutamine hydrolysis of the active site. Residues Leu-379–Gln-382, Glu-402, and Arg-469 contribute to the L-glutamine site. Residues His-516 and Glu-518 contribute to the active site.

The protein belongs to the CTP synthase family. As to quaternary structure, homotetramer.

The catalysed reaction is UTP + L-glutamine + ATP + H2O = CTP + L-glutamate + ADP + phosphate + 2 H(+). It carries out the reaction L-glutamine + H2O = L-glutamate + NH4(+). The enzyme catalyses UTP + NH4(+) + ATP = CTP + ADP + phosphate + 2 H(+). It participates in pyrimidine metabolism; CTP biosynthesis via de novo pathway; CTP from UDP: step 2/2. Its activity is regulated as follows. Allosterically activated by GTP, when glutamine is the substrate; GTP has no effect on the reaction when ammonia is the substrate. The allosteric effector GTP functions by stabilizing the protein conformation that binds the tetrahedral intermediate(s) formed during glutamine hydrolysis. Inhibited by the product CTP, via allosteric rather than competitive inhibition. Its function is as follows. Catalyzes the ATP-dependent amination of UTP to CTP with either L-glutamine or ammonia as the source of nitrogen. Regulates intracellular CTP levels through interactions with the four ribonucleotide triphosphates. This chain is CTP synthase, found in Azoarcus sp. (strain BH72).